The primary structure comprises 1169 residues: ATP-dependent helicase/deoxyribonuclease subunit B (1169 aa).

Residues 1 to 296 (MTLRIVSGRS…QHVEANFANM (296 aa)) form the UvrD-like helicase ATP-binding domain. Position 8-15 (8-15 (GRSGTGKS)) interacts with ATP. The 307-residue stretch at 276–582 (YYTQRFQSED…EFSRIPPTLD (307 aa)) folds into the UvrD-like helicase C-terminal domain. Residues C804, C1129, C1132, and C1138 each contribute to the [4Fe-4S] cluster site.

The protein belongs to the helicase family. AddB/RexB type 1 subfamily. In terms of assembly, heterodimer of AddA and AddB. The cofactor is Mg(2+). [4Fe-4S] cluster is required as a cofactor.

Functionally, the heterodimer acts as both an ATP-dependent DNA helicase and an ATP-dependent, dual-direction single-stranded exonuclease. Recognizes the chi site generating a DNA molecule suitable for the initiation of homologous recombination. The AddB subunit has 5' -&gt; 3' nuclease activity but not helicase activity. The chain is ATP-dependent helicase/deoxyribonuclease subunit B from Lysinibacillus sphaericus (strain C3-41).